A 345-amino-acid polypeptide reads, in one-letter code: UPF0324 membrane protein Cgl0015/cg0018 (345 aa).

The next 10 helical transmembrane spans lie at 15–37 (LRTG…VLIA), 44–66 (FSGV…LIQL), 81–103 (LLRL…SLGF), 105–124 (MLAV…ILMG), 134–156 (VLLI…EGVT), 163–185 (VVTA…PFAT), 205–227 (EIAQ…AVVV), 261–280 (VVPL…STVA), 285–307 (VIAA…LGCG), and 320–342 (PFIL…TLLT).

It belongs to the UPF0324 family.

Its subcellular location is the cell membrane. In Corynebacterium glutamicum (strain ATCC 13032 / DSM 20300 / JCM 1318 / BCRC 11384 / CCUG 27702 / LMG 3730 / NBRC 12168 / NCIMB 10025 / NRRL B-2784 / 534), this protein is UPF0324 membrane protein Cgl0015/cg0018.